Reading from the N-terminus, the 621-residue chain is tRNA uridine 5-carboxymethylaminomethyl modification enzyme MnmG (621 aa).

FAD is bound at residue 9-14 (GGGHAG). 270–284 (GPRYCPSIEDKIVKF) contacts NAD(+).

This sequence belongs to the MnmG family. Homodimer. Heterotetramer of two MnmE and two MnmG subunits. FAD serves as cofactor.

Its subcellular location is the cytoplasm. In terms of biological role, NAD-binding protein involved in the addition of a carboxymethylaminomethyl (cmnm) group at the wobble position (U34) of certain tRNAs, forming tRNA-cmnm(5)s(2)U34. The polypeptide is tRNA uridine 5-carboxymethylaminomethyl modification enzyme MnmG (Borreliella burgdorferi (strain ATCC 35210 / DSM 4680 / CIP 102532 / B31) (Borrelia burgdorferi)).